Consider the following 154-residue polypeptide: Large ribosomal subunit protein uL24 (154 aa).

Residues 97–154 (EIAARKNLPPPEVPEETSNDTKESDENVTGADKEETNEIKEEDLNDNEDKNNDGSQEA) form a disordered region. Residues 115-135 (NDTKESDENVTGADKEETNEI) show a composition bias toward basic and acidic residues.

Belongs to the universal ribosomal protein uL24 family. In terms of assembly, part of the 50S ribosomal subunit.

One of two assembly initiator proteins, it binds directly to the 5'-end of the 23S rRNA, where it nucleates assembly of the 50S subunit. In terms of biological role, located at the polypeptide exit tunnel on the outside of the subunit. The polypeptide is Large ribosomal subunit protein uL24 (Picrophilus torridus (strain ATCC 700027 / DSM 9790 / JCM 10055 / NBRC 100828 / KAW 2/3)).